Here is a 153-residue protein sequence, read N- to C-terminus: MSTDPISLQEIMSFLPHRYPFLLIDRIVEVEQGKRILAIKNVSFNEPHFQGHFPDHPVMPGVLILEAMAQAGALLAGYTDPDSVRGQLVYFMAIDKARFRKPVLPGHQLNIEMTLLKRRREVWRFGGKAMVDGEVACEAEVMAMTRKREESHE.

His52 is a catalytic residue.

The protein belongs to the thioester dehydratase family. FabZ subfamily.

The protein localises to the cytoplasm. It catalyses the reaction a (3R)-hydroxyacyl-[ACP] = a (2E)-enoyl-[ACP] + H2O. In terms of biological role, involved in unsaturated fatty acids biosynthesis. Catalyzes the dehydration of short chain beta-hydroxyacyl-ACPs and long chain saturated and unsaturated beta-hydroxyacyl-ACPs. The chain is 3-hydroxyacyl-[acyl-carrier-protein] dehydratase FabZ from Magnetococcus marinus (strain ATCC BAA-1437 / JCM 17883 / MC-1).